The chain runs to 853 residues: A-kinase anchor protein 3 (853 aa).

Positions 124-137 (VSFYANRLTNLVIA) are PKA-RII subunit binding domain. The interval 188-240 (RNAAPDKAPGSGDRVSGSSQSPPNLKYKSTLKIKESTKERQGPDDKPPSKKSF) is disordered. A phosphoserine mark is found at serine 205 and serine 208. Residues 219–235 (KIKESTKERQGPDDKPP) are compositionally biased toward basic and acidic residues. Serine 403 bears the Phosphoserine mark. Tyrosine 404 is subject to Phosphotyrosine. Serine 635 and serine 636 each carry phosphoserine.

Belongs to the AKAP110 family. Interacts with ROPN1 and ROPN1L. Interacts with QRICH2. Phosphorylated by STK33 during sperm flagella assembly. Phosphorylated on tyrosine residues. In terms of tissue distribution, testis specific; only expressed in spermatids.

The protein localises to the cytoplasmic vesicle. The protein resides in the secretory vesicle. It is found in the acrosome. It localises to the cell projection. Its subcellular location is the cilium. The protein localises to the flagellum. In terms of biological role, structural component of sperm fibrous sheath. Required for the formation of the subcellular structure of the sperm flagellum, sperm motility and male fertility. The protein is A-kinase anchor protein 3 of Homo sapiens (Human).